The sequence spans 233 residues: 5-demethoxyubiquinone hydroxylase, mitochondrial (233 aa).

The N-terminal 15 residues, 1–15, are a transit peptide targeting the mitochondrion; it reads MLSRVSVFKPASRGF. S20 and S28 each carry phosphoserine. Position 32 is a phosphothreonine (T32). The Fe cation site is built by E63, E95, H98, E147, E194, and H197.

Belongs to the COQ7 family. As to quaternary structure, component of a multi-subunit COQ enzyme complex, composed of at least COQ3, COQ4, COQ5, COQ6, COQ7 and COQ9. It depends on Fe cation as a cofactor. Phosphorylated. Dephosphorylated by PTC7; dephosphorylation is essential for enzyme activation.

It is found in the mitochondrion inner membrane. The enzyme catalyses a 5-methoxy-2-methyl-3-(all-trans-polyprenyl)benzene-1,4-diol + AH2 + O2 = a 3-demethylubiquinol + A + H2O. It carries out the reaction a 5-methoxy-2-methyl-3-(all-trans-polyprenyl)benzoquinone + NADH + O2 = a 3-demethylubiquinone + NAD(+) + H2O. The protein operates within cofactor biosynthesis; ubiquinone biosynthesis. Dephosphorylation by PTC7 leads to activation. Catalyzes the hydroxylation of 2-hexaprenyl-3-methyl-6-methoxy-1,4-benzoquinol (DMQH2) during ubiquinone biosynthesis. Also catalyzes the hydroxylation of the 5-methoxy-2-methyl-3-(all-trans-polyprenyl)benzoquinone at the C6 position and participates in the biosynthesis of ubiquinone. Also has a structural role in the COQ enzyme complex, stabilizing COQ3 and COQ4 polypeptides. This is 5-demethoxyubiquinone hydroxylase, mitochondrial from Saccharomyces cerevisiae (strain ATCC 204508 / S288c) (Baker's yeast).